A 318-amino-acid chain; its full sequence is Large ribosomal subunit protein uL10 (318 aa).

Y24 is modified (phosphotyrosine). Residue T59 is modified to Phosphothreonine. A Glycyl lysine isopeptide (Lys-Gly) (interchain with G-Cter in ubiquitin) cross-link involves residue K264. K298 is covalently cross-linked (Glycyl lysine isopeptide (Lys-Gly) (interchain with G-Cter in SUMO1); alternate). A Glycyl lysine isopeptide (Lys-Gly) (interchain with G-Cter in SUMO2); alternate cross-link involves residue K298. Residues 298-318 (KVEAKEESEESDEDMGFGLFD) are disordered. Over residues 303–312 (EESEESDEDM) the composition is skewed to acidic residues. A phosphoserine mark is found at S305 and S308.

Belongs to the universal ribosomal protein uL10 family. P0 forms a pentameric complex by interaction with dimers of P1 and P2. Identified in a IGF2BP1-dependent mRNP granule complex containing untranslated mRNAs. Interacts with APEX1. Interacts with FMR1. Ubiquitinated at Lys-264 by RNF14 and RNF25 in response to ribosome collisions (ribosome stalling).

The protein localises to the nucleus. It localises to the cytoplasm. Ribosomal protein P0 is the functional equivalent of E.coli protein L10. This Sus scrofa (Pig) protein is Large ribosomal subunit protein uL10 (RPLP0).